Consider the following 490-residue polypeptide: tRNA-guanine(15) transglycosylase (490 aa).

Asp90 (nucleophile) is an active-site residue. Residues Asp125 and Ala193 each contribute to the substrate site. 3 residues coordinate Zn(2+): Cys276, Cys278, and Cys281.

Belongs to the archaeosine tRNA-ribosyltransferase family. The cofactor is Zn(2+).

The enzyme catalyses guanosine(15) in tRNA + 7-cyano-7-deazaguanine = 7-cyano-7-carbaguanosine(15) in tRNA + guanine. Its pathway is tRNA modification; archaeosine-tRNA biosynthesis. Exchanges the guanine residue with 7-cyano-7-deazaguanine (preQ0) at position 15 in the dihydrouridine loop (D-loop) of archaeal tRNAs. The sequence is that of tRNA-guanine(15) transglycosylase from Methanosarcina mazei (strain ATCC BAA-159 / DSM 3647 / Goe1 / Go1 / JCM 11833 / OCM 88) (Methanosarcina frisia).